A 460-amino-acid chain; its full sequence is MLKILIPTLMLFPTIWLSPAKWLWTTSIAQSLIIALASLSWLKWSSETGWSSSNLYLATDPLSTPLLVLTCWLLPLMILASQSHLSPEPLNRQRAYISLLVSLQTFLVLAFGATEIIMFYVMFEATLLPTLIIITRWGNQTERLNAGTYFLFYTLAGSLPLLVALLLMQNDNGTLSMFTLQYTQPLHLLTWGDKLWWAACLLAFLVKMPLYGVHLWLPKAHVEAPIAGSMILAAVLLKLGGYGMMRMMVMLDPLTKELAYPFIVLALWGIIMTGSICLRQTDLKSLIAYSSVGHMGLVAGGILIQTPWGFTGAIILMIAHGLASSALFCLANTSYERTHSRTMLLARGMQMILPLMTTWWFVASLANLALPPLPNLMGELMIITSMFNWSYWTLILTGLGTLITASYSLYLFLMTQRGPLPSHIIALEPTHTREHLLIILHLIPIVLLILKPELMWGWCF.

The next 13 helical transmembrane spans lie at 20–42 (AKWL…LSWL), 61–81 (PLST…ILAS), 94–113 (RAYI…AFGA), 117–139 (IMFY…RWGN), 148–168 (TYFL…LLLM), 195–215 (LWWA…GVHL), 225–245 (PIAG…YGMM), 258–278 (LAYP…SICL), 285–304 (SLIA…GILI), 308–330 (WGFT…LFCL), 351–371 (MILP…LALP), 394–414 (LILT…LFLM), and 436–456 (LLII…ELMW).

It belongs to the complex I subunit 4 family.

Its subcellular location is the mitochondrion membrane. It catalyses the reaction a ubiquinone + NADH + 5 H(+)(in) = a ubiquinol + NAD(+) + 4 H(+)(out). Its function is as follows. Core subunit of the mitochondrial membrane respiratory chain NADH dehydrogenase (Complex I) that is believed to belong to the minimal assembly required for catalysis. Complex I functions in the transfer of electrons from NADH to the respiratory chain. The immediate electron acceptor for the enzyme is believed to be ubiquinone. The protein is NADH-ubiquinone oxidoreductase chain 4 (MT-ND4) of Oncorhynchus mykiss (Rainbow trout).